We begin with the raw amino-acid sequence, 507 residues long: Probable cytosol aminopeptidase (507 aa).

Residues Lys-275 and Asp-280 each contribute to the Mn(2+) site. Residue Lys-287 is part of the active site. The Mn(2+) site is built by Asp-298, Asp-357, and Glu-359. Residue Arg-361 is part of the active site.

Belongs to the peptidase M17 family. The cofactor is Mn(2+).

Its subcellular location is the cytoplasm. It catalyses the reaction Release of an N-terminal amino acid, Xaa-|-Yaa-, in which Xaa is preferably Leu, but may be other amino acids including Pro although not Arg or Lys, and Yaa may be Pro. Amino acid amides and methyl esters are also readily hydrolyzed, but rates on arylamides are exceedingly low.. The catalysed reaction is Release of an N-terminal amino acid, preferentially leucine, but not glutamic or aspartic acids.. Its function is as follows. Presumably involved in the processing and regular turnover of intracellular proteins. Catalyzes the removal of unsubstituted N-terminal amino acids from various peptides. This is Probable cytosol aminopeptidase from Acidobacterium capsulatum (strain ATCC 51196 / DSM 11244 / BCRC 80197 / JCM 7670 / NBRC 15755 / NCIMB 13165 / 161).